Here is a 114-residue protein sequence, read N- to C-terminus: Protein vCCL3 (114 aa).

The first 26 residues, 1-26 (MWSMCWVLRAHLGLLFWVAVIELCAA), serve as a signal peptide directing secretion.

Acts as a highly selective agonist for human lymphoactin receptor XCR1. This Human herpesvirus 8 type P (isolate GK18) (HHV-8) protein is Protein vCCL3 (K4.1).